Here is a 210-residue protein sequence, read N- to C-terminus: Na(+)-translocating NADH-quinone reductase subunit D (210 aa).

6 consecutive transmembrane segments (helical) span residues 14-34, 42-62, 72-92, 96-116, 131-151, and 178-198; these read PIIN…ALAV, LVMS…ISLI, IIVQ…VLQA, EIAK…IVMG, FMDG…VGFF, and NGLL…IWVI.

The protein belongs to the NqrDE/RnfAE family. As to quaternary structure, composed of six subunits; NqrA, NqrB, NqrC, NqrD, NqrE and NqrF.

The protein resides in the cell inner membrane. It carries out the reaction a ubiquinone + n Na(+)(in) + NADH + H(+) = a ubiquinol + n Na(+)(out) + NAD(+). Its function is as follows. NQR complex catalyzes the reduction of ubiquinone-1 to ubiquinol by two successive reactions, coupled with the transport of Na(+) ions from the cytoplasm to the periplasm. NqrA to NqrE are probably involved in the second step, the conversion of ubisemiquinone to ubiquinol. The sequence is that of Na(+)-translocating NADH-quinone reductase subunit D from Shewanella denitrificans (strain OS217 / ATCC BAA-1090 / DSM 15013).